We begin with the raw amino-acid sequence, 436 residues long: tRNA-2-methylthio-N(6)-dimethylallyladenosine synthase (436 aa).

One can recognise an MTTase N-terminal domain in the interval 1 to 115 (MRVFFKTYGC…IAEVLQKAAR (115 aa)). [4Fe-4S] cluster-binding residues include Cys-10, Cys-46, Cys-80, Cys-151, Cys-155, and Cys-158. In terms of domain architecture, Radical SAM core spans 137–368 (RFSKHHAWIT…LELQKQINRE (232 aa)). A TRAM domain is found at 371 to 432 (MQYLGKVVEI…AGPLYGKLQK (62 aa)).

The protein belongs to the methylthiotransferase family. MiaB subfamily. In terms of assembly, monomer. The cofactor is [4Fe-4S] cluster.

It localises to the cytoplasm. The enzyme catalyses N(6)-dimethylallyladenosine(37) in tRNA + (sulfur carrier)-SH + AH2 + 2 S-adenosyl-L-methionine = 2-methylsulfanyl-N(6)-dimethylallyladenosine(37) in tRNA + (sulfur carrier)-H + 5'-deoxyadenosine + L-methionine + A + S-adenosyl-L-homocysteine + 2 H(+). Functionally, catalyzes the methylthiolation of N6-(dimethylallyl)adenosine (i(6)A), leading to the formation of 2-methylthio-N6-(dimethylallyl)adenosine (ms(2)i(6)A) at position 37 in tRNAs that read codons beginning with uridine. This is tRNA-2-methylthio-N(6)-dimethylallyladenosine synthase from Pseudothermotoga lettingae (strain ATCC BAA-301 / DSM 14385 / NBRC 107922 / TMO) (Thermotoga lettingae).